The sequence spans 394 residues: Protein maelstrom (394 aa).

The segment at residues 2–69 is a DNA-binding region (HMG box); it reads APKKQNGFMM…ARRDKRGSLN (68 aa). Residues 44–93 are disordered; the sequence is TQQRGPYNSDAKDANAARRDKRGSLNGHGQVDKAQREAAESLMDKAQREA. Residues 73–93 show a composition bias toward basic and acidic residues; that stretch reads QVDKAQREAAESLMDKAQREA.

Belongs to the maelstrom family.

Its subcellular location is the cytoplasm. It is found in the nucleus. In terms of biological role, involved both in the piRNA and miRNA metabolic processes. As a component of the meiotic nuage, plays a central role during oogenesis by repressing transposable elements and preventing their mobilization, which is essential for the germline integrity. Repression of transposable elements is mediated via the piRNA metabolic process, which mediates the repression of transposable elements during meiosis by forming complexes composed of piRNAs and Piwi proteins and governs the repression of transposons. As a nuclear component, it is required for proper differentiation in the germline stem cell (GSC) lineage by repressing microRNA-7 (miR-7), thereby acting as an indirect regulator of bag-of-marbles (Bam). Acts by binding to the promoter of miR-7 gene and repressing its expression; miR-7 repression alleviates the Bam repression by miR-7, thereby allowing differentiation in the germline stem cell (GSC) lineage. This is Protein maelstrom (mael) from Drosophila simulans (Fruit fly).